The primary structure comprises 745 residues: Ribosomal protein S6 kinase alpha-6 (745 aa).

Residues 1–28 form a disordered region; the sequence is MLPFAPQDEPWDREMEVFSGGGASSGEV. The 258-residue stretch at 73 to 330 folds into the Protein kinase 1 domain; it reads FELLKVLGQG…VEEIKRHLFF (258 aa). ATP is bound by residues 79 to 87 and Lys105; that span reads LGQGSFGKV. Asp198 (proton acceptor) is an active-site residue. Phosphoserine occurs at positions 232, 372, and 389. The region spanning 331–400 is the AGC-kinase C-terminal domain; that stretch reads ANIDWDKLYK…VATSIAEEYK (70 aa). Residues 426-683 form the Protein kinase 2 domain; that stretch reads YELKEDIGVG…AEQILKHSWI (258 aa). Residues 432–440 and Lys455 contribute to the ATP site; that span reads IGVGSYSVC. Asp543 serves as the catalytic Proton acceptor. Residue Thr581 is modified to Phosphothreonine.

This sequence belongs to the protein kinase superfamily. AGC Ser/Thr protein kinase family. S6 kinase subfamily. In terms of assembly, forms a complex with MAPK3/ERK1 but not with MAPK9 or MAPK14 in serum-starved cells. Requires Mg(2+) as cofactor. Post-translationally, phosphorylated at Ser-232, Ser-372, and Ser-389 in serum-starved cells.

It localises to the cytoplasm. The protein localises to the cytosol. Its subcellular location is the nucleus. It catalyses the reaction L-seryl-[protein] + ATP = O-phospho-L-seryl-[protein] + ADP + H(+). It carries out the reaction L-threonyl-[protein] + ATP = O-phospho-L-threonyl-[protein] + ADP + H(+). Its activity is regulated as follows. Constitutively activated by phosphorylation at Ser-232, Ser-372, and Ser-389 in serum-starved cells. Does not require growth factor stimulation for significant kinase activity. Functionally, constitutively active serine/threonine-protein kinase that exhibits growth-factor-independent kinase activity and that may participate in p53/TP53-dependent cell growth arrest signaling and play an inhibitory role during embryogenesis. The protein is Ribosomal protein S6 kinase alpha-6 (RPS6KA6) of Homo sapiens (Human).